The primary structure comprises 262 residues: 4-hydroxy-2-oxovalerate aldolase (262 aa).

Catalysis depends on H48, which acts as the Proton acceptor. Q149 contributes to the substrate binding site. Mg(2+) is bound at residue E151. Residues A176 and D177 each coordinate substrate. Mg(2+) is bound at residue D177.

This sequence belongs to the HpcH/HpaI aldolase family.

It catalyses the reaction (S)-4-hydroxy-2-oxopentanoate = acetaldehyde + pyruvate. It participates in xenobiotic degradation; biphenyl degradation. In terms of biological role, catalyzes the reversible retro-aldol cleavage of 4-hydroxy-2-oxovalerate to pyruvate and acetaldehyde. The protein is 4-hydroxy-2-oxovalerate aldolase (bphF) of Novosphingobium aromaticivorans (Sphingomonas aromaticivorans).